The following is a 780-amino-acid chain: Acetyl-CoA decarbonylase/synthase complex subunit alpha (780 aa).

Residues cysteine 73, cysteine 76, cysteine 77, cysteine 79, cysteine 84, and cysteine 93 each contribute to the [4Fe-4S] cluster site. Histidine 116 is a CO binding site. [Ni-4Fe-4S] cluster is bound by residues histidine 250, cysteine 278, and cysteine 317. 4Fe-4S ferredoxin-type domains are found at residues 399-429 (IDEIIELASECTDCGWCQRVCPNSLPVMDAV) and 440-469 (LEEMAIEELCYTCGRCEQECERNIPIVSMV). [4Fe-4S] cluster-binding residues include cysteine 409, cysteine 412, cysteine 415, cysteine 419, cysteine 449, cysteine 452, cysteine 455, and cysteine 459. Cysteine 517, cysteine 546, and cysteine 581 together coordinate [Ni-4Fe-4S] cluster.

Belongs to the Ni-containing carbon monoxide dehydrogenase family. As to quaternary structure, heterotetramer of two alpha and two epsilon subunits. The ACDS complex is made up of alpha, epsilon, beta, gamma and delta subunits with a probable stoichiometry of (alpha(2)epsilon(2))(4)-beta(8)-(gamma(1)delta(1))(8). The cofactor is [4Fe-4S] cluster. [Ni-4Fe-4S] cluster is required as a cofactor.

The catalysed reaction is CO + 2 oxidized [2Fe-2S]-[ferredoxin] + H2O = 2 reduced [2Fe-2S]-[ferredoxin] + CO2 + 2 H(+). Its function is as follows. Part of the ACDS complex that catalyzes the reversible cleavage of acetyl-CoA, allowing autotrophic growth from CO(2). The alpha-epsilon subcomponent functions as a carbon monoxide dehydrogenase. In Methanothermobacter thermautotrophicus (strain ATCC 29096 / DSM 1053 / JCM 10044 / NBRC 100330 / Delta H) (Methanobacterium thermoautotrophicum), this protein is Acetyl-CoA decarbonylase/synthase complex subunit alpha.